The following is a 420-amino-acid chain: L-rhamnose isomerase (420 aa).

Mn(2+)-binding residues include His-262, Asp-294, and Asp-296.

Belongs to the rhamnose isomerase family. Homotetramer. Mn(2+) is required as a cofactor.

The protein localises to the cytoplasm. The catalysed reaction is L-rhamnopyranose = L-rhamnulose. Its pathway is carbohydrate degradation; L-rhamnose degradation; glycerone phosphate from L-rhamnose: step 1/3. Catalyzes the interconversion of L-rhamnose and L-rhamnulose. The protein is L-rhamnose isomerase of Pectobacterium carotovorum subsp. carotovorum (strain PC1).